We begin with the raw amino-acid sequence, 231 residues long: MKWEEWKPFYERIVKEMGYSIEEDRRAAELLRDILMENDNYIIKEELNSIIMQKVYVFGAGPNLEEALKKGDFKDGTKIAADGATSALLEYGITPDVVVTDLDGRIRDLLEASRKAVMVVHAHGDNMDKLPLVVEFPLVLGTCQTEPLDIVYNFGGFTDGDRAAFLAEEMGAKEIVLVGFDFSGIVGKWSKPWLRDHTPAWESKMKKLKFARELLEWLKNNGRAKIIEFSI.

Belongs to the archaeal 6-HMPDK family. It depends on Mg(2+) as a cofactor.

The catalysed reaction is 6-hydroxymethyl-7,8-dihydropterin + ATP = (7,8-dihydropterin-6-yl)methyl diphosphate + AMP + H(+). In terms of biological role, catalyzes the transfer of diphosphate from ATP to 6-hydroxymethyl-7,8-dihydropterin (6-HMD), leading to 6-hydroxymethyl-7,8-dihydropterin diphosphate (6-HMDP). To a lesser extent, can also use CTP, UTP, and GTP as the nucleotide triphosphate substrate. The protein is 6-hydroxymethyl-7,8-dihydropterin pyrophosphokinase of Pyrococcus furiosus (strain ATCC 43587 / DSM 3638 / JCM 8422 / Vc1).